A 282-amino-acid polypeptide reads, in one-letter code: Probable endonuclease 4 (282 aa).

Residues H69, H109, E145, D179, H182, H216, D229, H231, and E261 each contribute to the Zn(2+) site.

This sequence belongs to the AP endonuclease 2 family. Zn(2+) is required as a cofactor.

It carries out the reaction Endonucleolytic cleavage to 5'-phosphooligonucleotide end-products.. Functionally, endonuclease IV plays a role in DNA repair. It cleaves phosphodiester bonds at apurinic or apyrimidinic (AP) sites, generating a 3'-hydroxyl group and a 5'-terminal sugar phosphate. The polypeptide is Probable endonuclease 4 (Chlorobium chlorochromatii (strain CaD3)).